The following is a 673-amino-acid chain: Putative transcription factor tau subunit sfc9 (673 aa).

In terms of assembly, may be a component of the TFIIIC complex.

The protein resides in the nucleus. The sequence is that of Putative transcription factor tau subunit sfc9 from Schizosaccharomyces pombe (strain 972 / ATCC 24843) (Fission yeast).